Reading from the N-terminus, the 548-residue chain is Glucose-6-phosphate isomerase (548 aa).

Catalysis depends on Glu354, which acts as the Proton donor. Residues His385 and Lys513 contribute to the active site.

The protein belongs to the GPI family.

It localises to the cytoplasm. The catalysed reaction is alpha-D-glucose 6-phosphate = beta-D-fructose 6-phosphate. Its pathway is carbohydrate biosynthesis; gluconeogenesis. It functions in the pathway carbohydrate degradation; glycolysis; D-glyceraldehyde 3-phosphate and glycerone phosphate from D-glucose: step 2/4. Functionally, catalyzes the reversible isomerization of glucose-6-phosphate to fructose-6-phosphate. This is Glucose-6-phosphate isomerase from Marinomonas sp. (strain MWYL1).